Here is a 124-residue protein sequence, read N- to C-terminus: Acidic phospholipase A2 BA2 (124 aa).

Cystine bridges form between cysteine 26–cysteine 116, cysteine 28–cysteine 44, cysteine 43–cysteine 95, cysteine 49–cysteine 124, cysteine 50–cysteine 88, cysteine 57–cysteine 81, and cysteine 75–cysteine 86. Residues tyrosine 27, glycine 29, and glycine 31 each contribute to the Ca(2+) site. The active site involves histidine 47. Aspartate 48 serves as a coordination point for Ca(2+). Aspartate 89 is a catalytic residue.

It belongs to the phospholipase A2 family. Group II subfamily. D49 sub-subfamily. Ca(2+) serves as cofactor. Expressed by the venom gland.

Its subcellular location is the secreted. The enzyme catalyses a 1,2-diacyl-sn-glycero-3-phosphocholine + H2O = a 1-acyl-sn-glycero-3-phosphocholine + a fatty acid + H(+). Functionally, PLA2 catalyzes the calcium-dependent hydrolysis of the 2-acyl groups in 3-sn-phosphoglycerides. This Gloydius halys (Chinese water mocassin) protein is Acidic phospholipase A2 BA2.